Consider the following 131-residue polypeptide: MYNFDYSKLPIKNIQKIFPIAGGYVNLSFSVDASNKKYFLKLQPNTKSNFFDYELSSLKELTDKNIPVPQIINKGELDNNSFLLLEFIENGHAYPESYRKLGKIVANMHKNINSLNLFGFSHNFNGGTIEF.

This is an uncharacterized protein from Staphylococcus aureus.